Consider the following 555-residue polypeptide: Dynein regulatory complex protein 11 (555 aa).

IQ domains lie at 154-183 (EDEAILMIQKNERGRQARERARLAAITKRQ) and 199-226 (HEEAARKIQAAIRGFLWRRRIKKEADKE). 4 disordered regions span residues 232 to 255 (MKPKPRDPKRDPQMGEAKNLMRRK), 299 to 377 (KRNP…EQKI), 450 to 469 (AAKLGKKGKKKKGKKKEPFS), and 501 to 555 (AKKD…SCGA). 2 stretches are compositionally biased toward basic and acidic residues: residues 235–244 (KPRDPKRDPQ) and 338–367 (GDGKGKGKDGKGDAKKDAKKDPKKDKKGGG). The segment covering 452 to 464 (KLGKKGKKKKGKK) has biased composition (basic residues). Basic and acidic residues predominate over residues 501 to 521 (AKKDEKDAAGDGKGKGKDGKG). Residues 537–546 (KKKKGGKKKS) show a composition bias toward basic residues.

It belongs to the AAA ATPase family. DRC11 subfamily. In terms of assembly, component of the nexin-dynein regulatory complex (N-DRC). Interacts with DRC5.

The protein resides in the cytoplasm. Its subcellular location is the cytoskeleton. It is found in the flagellum axoneme. In terms of biological role, component of the nexin-dynein regulatory complex (N-DRC), a key regulator of ciliary/flagellar motility which maintains the alignment and integrity of the distal axoneme and regulates microtubule sliding in motile axonemes. This Chlamydomonas reinhardtii (Chlamydomonas smithii) protein is Dynein regulatory complex protein 11.